The following is a 246-amino-acid chain: Ribonuclease 3 (246 aa).

The 123-residue stretch at 30-152 folds into the RNase III domain; the sequence is ISWIEKNLGH…MIGAIFLESG (123 aa). Residue E65 coordinates Mg(2+). D69 is an active-site residue. Residues D138 and E141 each contribute to the Mg(2+) site. Residue E141 is part of the active site. In terms of domain architecture, DRBM spans 177-246; that stretch reads HPKSALQEWA…AQALLDILAQ (70 aa).

Belongs to the ribonuclease III family. In terms of assembly, homodimer. Requires Mg(2+) as cofactor.

The protein localises to the cytoplasm. It catalyses the reaction Endonucleolytic cleavage to 5'-phosphomonoester.. Its function is as follows. Digests double-stranded RNA. Involved in the processing of primary rRNA transcript to yield the immediate precursors to the large and small rRNAs (23S and 16S). Processes some mRNAs, and tRNAs when they are encoded in the rRNA operon. Processes pre-crRNA and tracrRNA of type II CRISPR loci if present in the organism. This is Ribonuclease 3 from Zymomonas mobilis subsp. mobilis (strain ATCC 31821 / ZM4 / CP4).